The sequence spans 86 residues: Insulin-related peptide 2 (86 aa).

The signal sequence occupies residues 1-19 (MKFYIVFALILACAACVSS). Positions 20 to 43 (QEGTNFYCGRQLSRTLALVCWGAE) are excised as a propeptide. Position 63 is an arginine amide (Arg63). A propeptide spanning residues 67-86 (GPVDECCLKPCSIEEMLTYC) is cleaved from the precursor.

The protein belongs to the insulin family. In terms of tissue distribution, DAGWWVPPQSARALGGGR-amide: Expressed in corpora cardiaca (CC), corpora allata (CA), antennal lobe (AL) and gnathal ganglion (GNG) (at protein level). Expression in CC and CA detected in most animals, in AL in some animals and in GNG in few animals (at protein level).

The protein localises to the secreted. The polypeptide is Insulin-related peptide 2 (Agrotis ipsilon (Black cutworm moth)).